The primary structure comprises 197 residues: Probable UbiX-like flavin prenyltransferase (197 aa).

FMN-binding positions include G9–T11, S36, S87–T90, and R122.

This sequence belongs to the UbiX/PAD1 family. YclB subfamily. In terms of assembly, homododecamer.

It carries out the reaction dimethylallyl phosphate + FMNH2 = prenylated FMNH2 + phosphate. Functionally, involved in the non-oxidative decarboxylation and detoxification of phenolic derivatives under both aerobic and anaerobic conditions. Flavin prenyltransferase that catalyzes the synthesis of the prenylated FMN cofactor (prenyl-FMN) for phenolic acid decarboxylase. This chain is Probable UbiX-like flavin prenyltransferase, found in Escherichia coli O157:H7.